The chain runs to 147 residues: Phosphoribosyl-AMP cyclohydrolase (147 aa).

Asp91 lines the Mg(2+) pocket. Cys92 serves as a coordination point for Zn(2+). 2 residues coordinate Mg(2+): Asp93 and Asp95. Residues Cys108 and Cys115 each contribute to the Zn(2+) site.

This sequence belongs to the PRA-CH family. In terms of assembly, homodimer. Mg(2+) serves as cofactor. The cofactor is Zn(2+).

The protein resides in the cytoplasm. It carries out the reaction 1-(5-phospho-beta-D-ribosyl)-5'-AMP + H2O = 1-(5-phospho-beta-D-ribosyl)-5-[(5-phospho-beta-D-ribosylamino)methylideneamino]imidazole-4-carboxamide. It participates in amino-acid biosynthesis; L-histidine biosynthesis; L-histidine from 5-phospho-alpha-D-ribose 1-diphosphate: step 3/9. Its function is as follows. Catalyzes the hydrolysis of the adenine ring of phosphoribosyl-AMP. This Rhodopseudomonas palustris (strain BisB5) protein is Phosphoribosyl-AMP cyclohydrolase.